The following is a 316-amino-acid chain: MAANSVGKMSEKLRIKVDDVKINPKYVLYGVSTPNKRLYKRYSEFWKLKTRLERDVGSTIPYDFPEKPGVLDRRWQRRYDDPEMIDERRIGLERFLNELYNDRFDSRWRDTKIAQDFLQLSKPNVSQEKSQQHLETADEVGWDEMIRDIKLDLDKESDGTPSVRGALRARTKLHKLRERLEQDVQKKSLPSTEVTRRAALLRSLLKECDDIGTANIAQDRGRLLGVATSDNSSTTEVQGRTNNDLQQGQMQMVRDQEQELVALHRIIQAQRGLALEMNEELQTQNELLTALEDDVDNTGRRLQIANKKARHFNNSA.

Positions 1 to 124 (MAANSVGKMS…QDFLQLSKPN (124 aa)) constitute a PX domain. Residues 168-186 (RARTKLHKLRERLEQDVQK) are a coiled coil. In terms of domain architecture, t-SNARE coiled-coil homology spans 250 to 312 (MQMVRDQEQE…QIANKKARHF (63 aa)).

Possibly multimeric. Associates with VAM3.

It localises to the vacuole. Essential for proper morphogenesis of the vacuole. May exist as structural reinforcement on the surface of the vacuolar membrane and be required for maintenance against rupture by osmotic pressure. The sequence is that of Vacuolar morphogenesis protein 7 (VAM7) from Saccharomyces cerevisiae (strain ATCC 204508 / S288c) (Baker's yeast).